The primary structure comprises 329 residues: uncharacterized protein (329 aa).

A signal peptide spans 1–32; sequence MSQDRGPRRPRRLEKCALISASATVLSLTASG. The N-palmitoyl cysteine moiety is linked to residue C33. C33 is lipidated: S-diacylglycerol cysteine.

Its subcellular location is the cell membrane. This is an uncharacterized protein from Streptomyces coelicolor (strain ATCC BAA-471 / A3(2) / M145).